The chain runs to 597 residues: Elongation factor 4 (597 aa).

The tr-type G domain occupies 2–184 (KHIRNFSIIA…NIVSAIPAPE (183 aa)). GTP contacts are provided by residues 14-19 (DHGKST) and 131-134 (NKID).

The protein belongs to the TRAFAC class translation factor GTPase superfamily. Classic translation factor GTPase family. LepA subfamily.

It localises to the cell inner membrane. The catalysed reaction is GTP + H2O = GDP + phosphate + H(+). Required for accurate and efficient protein synthesis under certain stress conditions. May act as a fidelity factor of the translation reaction, by catalyzing a one-codon backward translocation of tRNAs on improperly translocated ribosomes. Back-translocation proceeds from a post-translocation (POST) complex to a pre-translocation (PRE) complex, thus giving elongation factor G a second chance to translocate the tRNAs correctly. Binds to ribosomes in a GTP-dependent manner. In Vibrio parahaemolyticus serotype O3:K6 (strain RIMD 2210633), this protein is Elongation factor 4.